The sequence spans 482 residues: tRNA sulfurtransferase (482 aa).

The region spanning 61–165 (LAIRDALTRI…DDRLLLIKGR (105 aa)) is the THUMP domain. ATP contacts are provided by residues 183–184 (LI), Lys-265, Gly-287, and Gln-296. Residues Cys-344 and Cys-456 are joined by a disulfide bond. A Rhodanese domain is found at 404 to 482 (FGPNDVILDI…GFNNVKVYRP (79 aa)). Cys-456 serves as the catalytic Cysteine persulfide intermediate.

This sequence belongs to the ThiI family.

It localises to the cytoplasm. It catalyses the reaction [ThiI sulfur-carrier protein]-S-sulfanyl-L-cysteine + a uridine in tRNA + 2 reduced [2Fe-2S]-[ferredoxin] + ATP + H(+) = [ThiI sulfur-carrier protein]-L-cysteine + a 4-thiouridine in tRNA + 2 oxidized [2Fe-2S]-[ferredoxin] + AMP + diphosphate. The enzyme catalyses [ThiS sulfur-carrier protein]-C-terminal Gly-Gly-AMP + S-sulfanyl-L-cysteinyl-[cysteine desulfurase] + AH2 = [ThiS sulfur-carrier protein]-C-terminal-Gly-aminoethanethioate + L-cysteinyl-[cysteine desulfurase] + A + AMP + 2 H(+). The protein operates within cofactor biosynthesis; thiamine diphosphate biosynthesis. Catalyzes the ATP-dependent transfer of a sulfur to tRNA to produce 4-thiouridine in position 8 of tRNAs, which functions as a near-UV photosensor. Also catalyzes the transfer of sulfur to the sulfur carrier protein ThiS, forming ThiS-thiocarboxylate. This is a step in the synthesis of thiazole, in the thiamine biosynthesis pathway. The sulfur is donated as persulfide by IscS. The polypeptide is tRNA sulfurtransferase (Escherichia coli O139:H28 (strain E24377A / ETEC)).